Here is a 272-residue protein sequence, read N- to C-terminus: 1,4-dihydroxy-2-naphthoyl-CoA synthase (272 aa).

Residues arginine 33, 72–76 (SGGDQ), tyrosine 84, 116–120 (YAIGG), threonine 142, serine 148, tyrosine 245, and lysine 260 each bind substrate. Residue 141–143 (QTG) participates in hydrogencarbonate binding.

Belongs to the enoyl-CoA hydratase/isomerase family. MenB subfamily. The cofactor is hydrogencarbonate.

It catalyses the reaction 2-succinylbenzoyl-CoA + H(+) = 1,4-dihydroxy-2-naphthoyl-CoA + H2O. Its pathway is quinol/quinone metabolism; 1,4-dihydroxy-2-naphthoate biosynthesis; 1,4-dihydroxy-2-naphthoate from chorismate: step 6/7. It participates in quinol/quinone metabolism; menaquinone biosynthesis. In terms of biological role, converts o-succinylbenzoyl-CoA (OSB-CoA) to 1,4-dihydroxy-2-naphthoyl-CoA (DHNA-CoA). This Staphylococcus epidermidis (strain ATCC 12228 / FDA PCI 1200) protein is 1,4-dihydroxy-2-naphthoyl-CoA synthase.